Consider the following 667-residue polypeptide: UvrABC system protein B (667 aa).

Positions 24–195 (EGLRRGDRFQ…SSGGVFHLRG (172 aa)) constitute a Helicase ATP-binding domain. Residue 37–44 (GVTGSGKT) coordinates ATP. A Beta-hairpin motif is present at residues 90-113 (YYDYYQPEAYIPTKDLYIEKDADI). Residues 428-581 (QVDDFIEEVQ…QLMYNIEHDI (154 aa)) form the Helicase C-terminal domain. One can recognise a UVR domain in the interval 626–661 (EEYLALLEEEMWRASSELRYEDAAMLRDEMLRIKRE).

It belongs to the UvrB family. As to quaternary structure, forms a heterotetramer with UvrA during the search for lesions. Interacts with UvrC in an incision complex.

It is found in the cytoplasm. Its function is as follows. The UvrABC repair system catalyzes the recognition and processing of DNA lesions. A damage recognition complex composed of 2 UvrA and 2 UvrB subunits scans DNA for abnormalities. Upon binding of the UvrA(2)B(2) complex to a putative damaged site, the DNA wraps around one UvrB monomer. DNA wrap is dependent on ATP binding by UvrB and probably causes local melting of the DNA helix, facilitating insertion of UvrB beta-hairpin between the DNA strands. Then UvrB probes one DNA strand for the presence of a lesion. If a lesion is found the UvrA subunits dissociate and the UvrB-DNA preincision complex is formed. This complex is subsequently bound by UvrC and the second UvrB is released. If no lesion is found, the DNA wraps around the other UvrB subunit that will check the other stand for damage. The sequence is that of UvrABC system protein B from Kosmotoga olearia (strain ATCC BAA-1733 / DSM 21960 / TBF 19.5.1).